A 429-amino-acid chain; its full sequence is Histidine--tRNA ligase (429 aa).

It belongs to the class-II aminoacyl-tRNA synthetase family. Homodimer.

The protein resides in the cytoplasm. The catalysed reaction is tRNA(His) + L-histidine + ATP = L-histidyl-tRNA(His) + AMP + diphosphate + H(+). The protein is Histidine--tRNA ligase of Streptococcus mutans serotype c (strain ATCC 700610 / UA159).